The primary structure comprises 278 residues: Large ribosomal subunit protein uL2 (278 aa).

2 disordered regions span residues 26–57 and 225–278; these read RSTP…QGGG and VMNP…NKKR. Residues 258–278 are compositionally biased toward basic residues; the sequence is RSPKKASNKYIVRRRKTNKKR.

This sequence belongs to the universal ribosomal protein uL2 family. As to quaternary structure, part of the 50S ribosomal subunit. Forms a bridge to the 30S subunit in the 70S ribosome.

Functionally, one of the primary rRNA binding proteins. Required for association of the 30S and 50S subunits to form the 70S ribosome, for tRNA binding and peptide bond formation. It has been suggested to have peptidyltransferase activity; this is somewhat controversial. Makes several contacts with the 16S rRNA in the 70S ribosome. This is Large ribosomal subunit protein uL2 from Streptomyces coelicolor (strain ATCC BAA-471 / A3(2) / M145).